Consider the following 1204-residue polypeptide: TPR repeat-containing protein DDB_G0287999 (1204 aa).

Residues 32-48 show a composition bias toward low complexity; it reads TTDTTTTTSTSTTTDTD. A disordered region spans residues 32–55; the sequence is TTDTTTTTSTSTTTDTDTNSEKSN. TPR repeat units follow at residues 263–296, 379–412, and 583–617; these read SKGL…YKDL, NDSN…DQLY, and IQHF…GSVT. Positions 360 to 387 are disordered; sequence QPPPQEQQLMDDDSNSNSNNDSNNIIKN. The segment covering 374 to 387 has biased composition (low complexity); sequence NSNSNNDSNNIIKN. Disordered stretches follow at residues 639 to 660 and 761 to 797; these read NNNN…NNNN and DDND…KTTT. The span at 766–778 shows a compositional bias: low complexity; the sequence is DNNNNNNNNNNNN.

This is TPR repeat-containing protein DDB_G0287999 from Dictyostelium discoideum (Social amoeba).